The sequence spans 160 residues: Transcription elongation factor GreB (160 aa).

The protein belongs to the GreA/GreB family. GreB subfamily.

Its function is as follows. Necessary for efficient RNA polymerase transcription elongation past template-encoded arresting sites. The arresting sites in DNA have the property of trapping a certain fraction of elongating RNA polymerases that pass through, resulting in locked ternary complexes. Cleavage of the nascent transcript by cleavage factors such as GreA or GreB allows the resumption of elongation from the new 3'terminus. GreB releases sequences of up to 9 nucleotides in length. This is Transcription elongation factor GreB from Vibrio vulnificus (strain YJ016).